The sequence spans 412 residues: Multifunctional CCA protein (412 aa).

ATP contacts are provided by G8 and R11. Residues G8 and R11 each coordinate CTP. Residues D21 and D23 each coordinate Mg(2+). ATP contacts are provided by R91, R137, and R140. 3 residues coordinate CTP: R91, R137, and R140. The HD domain occupies 228 to 329; sequence TGIHTLMTLS…VKLFDSIDAW (102 aa).

The protein belongs to the tRNA nucleotidyltransferase/poly(A) polymerase family. Bacterial CCA-adding enzyme type 1 subfamily. In terms of assembly, monomer. Can also form homodimers and oligomers. Mg(2+) is required as a cofactor. Ni(2+) serves as cofactor.

The enzyme catalyses a tRNA precursor + 2 CTP + ATP = a tRNA with a 3' CCA end + 3 diphosphate. The catalysed reaction is a tRNA with a 3' CCA end + 2 CTP + ATP = a tRNA with a 3' CCACCA end + 3 diphosphate. Its function is as follows. Catalyzes the addition and repair of the essential 3'-terminal CCA sequence in tRNAs without using a nucleic acid template. Adds these three nucleotides in the order of C, C, and A to the tRNA nucleotide-73, using CTP and ATP as substrates and producing inorganic pyrophosphate. tRNA 3'-terminal CCA addition is required both for tRNA processing and repair. Also involved in tRNA surveillance by mediating tandem CCA addition to generate a CCACCA at the 3' terminus of unstable tRNAs. While stable tRNAs receive only 3'-terminal CCA, unstable tRNAs are marked with CCACCA and rapidly degraded. The protein is Multifunctional CCA protein of Shigella sonnei (strain Ss046).